A 441-amino-acid chain; its full sequence is MPAAALQRRPWVPAASEDHVLSIAADAAARDAASVAVEIERLVAENHRIHDVDGLNLNPATNVMNPAAEALLSRGLGSRPSLGYPGDKYEMGLEAIERIEVVAAELAAEVFGAKFAEVRVSSGALSNLYVFMATCRPGDTIIVPPPSIGGHVTHHAAGAAGLYGLKPVSAPVDADGYTVDVAALAKLAGEVKPKLITIGGSLNLFPHPVPAIREIADGVGAKLLFDAAHLSGMVAGKAWPQPLEQGAHAITMSTYKSLGGPAGGLIVSNDAALMERIDAIAYPGLTANSDAGRTAALARSLLDWKVHGVAYAAAMRETAQALARALDARGLPVFVKARGFTQSHQLAVEAARWGGGQHAAKKIAQGGLLACGIGLPIAPVEGDINGLRLGVPEIVRLGFTPDDMPQLADWIARALEGDAASVAAEVRERRTHLGELRYIVR.

N6-(pyridoxal phosphate)lysine is present on Lys-256.

Belongs to the SHMT family. Alpha-methylserine aldolase subfamily. In terms of assembly, homodimer. Requires pyridoxal 5'-phosphate as cofactor.

The catalysed reaction is 2-methyl-L-serine = formaldehyde + L-alanine. Catalyzes the reversible interconversion of alpha-methyl-L-serine to L-alanine and formaldehyde. The sequence is that of Alpha-methylserine aldolase from Variovorax paradoxus.